We begin with the raw amino-acid sequence, 374 residues long: N-acetyldiaminopimelate deacetylase (374 aa).

Asp69 is a catalytic residue. The Proton acceptor role is filled by Glu128.

This sequence belongs to the peptidase M20A family. N-acetyldiaminopimelate deacetylase subfamily.

The catalysed reaction is N-acetyl-(2S,6S)-2,6-diaminopimelate + H2O = (2S,6S)-2,6-diaminopimelate + acetate. The protein operates within amino-acid biosynthesis; L-lysine biosynthesis via DAP pathway; LL-2,6-diaminopimelate from (S)-tetrahydrodipicolinate (acetylase route): step 3/3. In terms of biological role, catalyzes the conversion of N-acetyl-diaminopimelate to diaminopimelate and acetate. This is N-acetyldiaminopimelate deacetylase (ykuR) from Bacillus subtilis (strain 168).